The sequence spans 88 residues: Sec-independent protein translocase protein TatA (88 aa).

A helical transmembrane segment spans residues 1 to 21; that stretch reads MNLGPTEILLILVIVVLLFGA. Basic and acidic residues predominate over residues 46–56; that stretch reads SNDDQRYEEQQ. The segment at 46-88 is disordered; the sequence is SNDDQRYEEQQQQRQIAAQAQQQVVNPVEIPQPQPTDIQRPQQ. The segment covering 57–68 has biased composition (low complexity); it reads QQRQIAAQAQQQ.

The protein belongs to the TatA/E family. In terms of assembly, the Tat system comprises two distinct complexes: a TatABC complex, containing multiple copies of TatA, TatB and TatC subunits, and a separate TatA complex, containing only TatA subunits. Substrates initially bind to the TatABC complex, which probably triggers association of the separate TatA complex to form the active translocon.

The protein localises to the cell membrane. Its function is as follows. Part of the twin-arginine translocation (Tat) system that transports large folded proteins containing a characteristic twin-arginine motif in their signal peptide across membranes. TatA could form the protein-conducting channel of the Tat system. The protein is Sec-independent protein translocase protein TatA of Corynebacterium diphtheriae (strain ATCC 700971 / NCTC 13129 / Biotype gravis).